A 489-amino-acid polypeptide reads, in one-letter code: Mitochondrial distribution and morphology protein 10 (489 aa).

The protein belongs to the MDM10 family. Component of the ER-mitochondria encounter structure (ERMES) or MDM complex, composed of MMM1, MDM10, MDM12 and MDM34. Associates with the mitochondrial outer membrane sorting assembly machinery SAM(core) complex.

The protein localises to the mitochondrion outer membrane. In terms of biological role, component of the ERMES/MDM complex, which serves as a molecular tether to connect the endoplasmic reticulum and mitochondria. Components of this complex are involved in the control of mitochondrial shape and protein biogenesis and may function in phospholipid exchange. MDM10 is involved in the late assembly steps of the general translocase of the mitochondrial outer membrane (TOM complex). Functions in the TOM40-specific route of the assembly of outer membrane beta-barrel proteins, including the association of TOM40 with the receptor TOM22 and small TOM proteins. Can associate with the SAM(core) complex as well as the MDM12-MMM1 complex, both involved in late steps of the major beta-barrel assembly pathway, that is responsible for biogenesis of all outer membrane beta-barrel proteins. May act as a switch that shuttles between both complexes and channels precursor proteins into the TOM40-specific pathway. Plays a role in mitochondrial morphology and in the inheritance of mitochondria. In Arthroderma otae (strain ATCC MYA-4605 / CBS 113480) (Microsporum canis), this protein is Mitochondrial distribution and morphology protein 10.